The sequence spans 513 residues: Nuclear pore complex protein NUP58 (513 aa).

Disordered regions lie at residues 28–62 (QTNS…QPQQ), 217–239 (SVGS…GQQQ), and 356–513 (RETA…TTRR). Positions 30–50 (NSIFSQSQPQQTNSIFSQSQP) are enriched in polar residues. Composition is skewed to low complexity over residues 51-62 (QQTNSIFSQPQQ) and 217-227 (SVGSQPSQGQG). The segment covering 356–365 (RETAKQEAAA) has biased composition (basic and acidic residues). Residues 377–386 (STTSTQPSTQ) are compositionally biased toward low complexity. The segment covering 393 to 427 (SSATPGGSNPPQTSVPTSNPSSGAGFSFLNTPASG) has biased composition (polar residues). The span at 428–446 (PSSSLFATPSSTAPTSSLF) shows a compositional bias: low complexity. Repeat copies occupy residues 446-447 (FG), 458-459 (FG), 466-467 (FG), 473-474 (FG), 486-487 (FG), and 497-498 (FG). The interval 446 to 498 (FGPSPTPTQTPLFGSSPASTFGSTQSLFGQTTPSLTMPSQFGGATPGSGASFG) is 6 X 2 AA repeats of F-G. Positions 452–484 (PTQTPLFGSSPASTFGSTQSLFGQTTPSLTMPS) are enriched in polar residues. Positions 504-513 (SRPKSRTTRR) are enriched in basic residues.

The protein belongs to the NUP58 family. In terms of assembly, part of the nuclear pore complex (NPC). The NPC has an eight-fold symmetrical structure comprising a central transport channel and two rings, the cytoplasmic and nuclear rings, to which eight filaments are attached. The cytoplasmic filaments have loose ends, while the nuclear filaments are joined in a distal ring, forming a nuclear basket. NPCs are highly dynamic in configuration and composition, and can be devided in 3 subcomplexes, the NUP62 subcomplex, the NUP107-160 subcomplex and the NUP93 subcomplex, containing approximately 30 different nucleoporin proteins. Interacts with GAI, NUP62, SKP1A and SKP1B. In terms of tissue distribution, ubiquitous. Higherst expression in cauline leaves, lowest in roots.

The protein resides in the nucleus envelope. The protein localises to the nucleus. It is found in the nuclear pore complex. Its function is as follows. Involved in nucleocytoplasmic trafficking. May have regulatory roles in the gibberellin pathway, in auxin signaling and in light perception. This chain is Nuclear pore complex protein NUP58, found in Arabidopsis thaliana (Mouse-ear cress).